The sequence spans 83 residues: MSSGGLLLLLGLLTFCAELTPVSSRKRHPYCNLPPDPGPCHDNKFAFYHHPASNKCKEFVYGGCGGNDNRFKTRNKCQCTCSG.

Residues 1–24 (MSSGGLLLLLGLLTFCAELTPVSS) form the signal peptide. Residues 31–81 (CNLPPDPGPCHDNKFAFYHHPASNKCKEFVYGGCGGNDNRFKTRNKCQCTC) form the BPTI/Kunitz inhibitor domain. 3 disulfides stabilise this stretch: Cys31–Cys81, Cys40–Cys64, and Cys56–Cys77.

This sequence belongs to the venom Kunitz-type family. In terms of assembly, heterodimer; disulfide-linked. The A chains have phospholipase A2 activity and the B chains show homology with the basic protease inhibitors. In terms of tissue distribution, expressed by the venom gland.

The protein localises to the secreted. Beta-bungarotoxins are presynaptic neurotoxins of the venom. The B chain is homologous to venom basic protease inhibitors but has no protease inhibitor activity and blocks voltage-gated potassium channels (Kv). In Bungarus multicinctus (Many-banded krait), this protein is Kunitz-type serine protease inhibitor homolog beta-bungarotoxin B5 chain.